A 2620-amino-acid polypeptide reads, in one-letter code: Ankyrin repeat and KH domain-containing protein mask-1 (2620 aa).

ANK repeat units lie at residues 254–283, 288–318, 361–390, 402–431, 437–466, 470–502, 507–536, 538–566, 568–597, 600–629, 634–663, and 667–697; these read SKIT…DPNV, NCNT…KKPD, ERDS…KNPP, ERYS…PADL, IEPS…KIEE, KKNT…EVDV, TGDT…DLTA, KTSP…TIPQ, QLSR…DLNF, DERT…SVNF, NDAT…DPML, and DGVN…NMPM. 3 disordered regions span residues 699-726, 994-1032, and 1192-1229; these read KDPP…SGQD, HQEE…QPGA, and SLMA…AIDK. Positions 1012 to 1029 are enriched in polar residues; that stretch reads TSLTAPNPADTSDVTTKQ. Low complexity predominate over residues 1192 to 1206; it reads SLMAKSVQSQQQQGQ. Positions 1210–1221 are enriched in basic and acidic residues; the sequence is THSEGDGAERAK. 10 ANK repeats span residues 1234 to 1263, 1267 to 1296, 1301 to 1330, 1334 to 1363, 1369 to 1398, 1403 to 1432, 1436 to 1465, 1471 to 1500, 1504 to 1533, and 1537 to 1566; these read TLET…NIEH, KGFS…AIEA, TKDT…NKEH, SDYT…EINS, LGIS…DINA, NRNT…NVEH, TGLT…DTNA, TKDT…AVDV, KGCT…DPDM, and RKIS…QFPN. Residues 1596–1648 are a coiled coil; it reads AKKAQAESAELAAQKLLELIDEEKVQKEVKKQKQKDKKIKKKEEKKIKKQEAE. 2 disordered regions span residues 1621–1720 and 1759–1804; these read QKEV…AEEP and KEGK…EIDT. The segment covering 1636 to 1647 has biased composition (basic and acidic residues); the sequence is KKEEKKIKKQEA. Residues 1648–1661 are compositionally biased toward acidic residues; that stretch reads EPEPEPEPEPEPVP. Composition is skewed to low complexity over residues 1665-1681 and 1769-1791; these read PVVI…IVVE and KSGY…TTSS. The KH domain occupies 1807–1873; that stretch reads ESSWKLTIPA…EMVRYAMNII (67 aa). Polar residues predominate over residues 1899 to 1913; it reads ASSFSSEGTSKSAVD. 8 disordered regions span residues 1899 to 1962, 1976 to 2010, 2067 to 2143, 2267 to 2294, 2307 to 2343, 2372 to 2391, 2429 to 2448, and 2496 to 2620; these read ASSF…GNVW, LMET…QASE, SVQS…QTQN, NATS…VTTG, SFAP…QQQQ, QHQS…KFSM, QESS…NSYY, and QKKQ…SSNW. The span at 1917–1946 shows a compositional bias: low complexity; the sequence is APSSIPKSLSSASIARQSASPIPQQSSQRS. The segment covering 1982–1993 has biased composition (polar residues); sequence ISQSPKQAPQIP. Composition is skewed to low complexity over residues 1994–2006, 2067–2078, and 2100–2118; these read STQQ…SRQD, SVQSVQHMQQQQ, and SQPI…SSFS. 2 stretches are compositionally biased toward polar residues: residues 2267-2286 and 2325-2339; these read NATS…VQQP and RSQS…STNI. The segment covering 2505–2528 has biased composition (polar residues); that stretch reads SFMHNSQQPQPFGAPSNASANQSR. Over residues 2535–2547 the composition is skewed to pro residues; it reads RPQPPPFVAPQAP. The span at 2552–2565 shows a compositional bias: polar residues; the sequence is SLGNASSTTNPSRT. 2 stretches are compositionally biased toward low complexity: residues 2566–2588 and 2597–2620; these read SMQQ…QMPQ and QQQQ…SSNW.

The protein belongs to the mask family.

The protein localises to the cytoplasm. This Caenorhabditis elegans protein is Ankyrin repeat and KH domain-containing protein mask-1.